The sequence spans 1692 residues: Protein TOPAZ1 (1692 aa).

Disordered stretches follow at residues 1–135 (MRRP…PGLD), 600–629 (ELSR…TGNK), and 894–919 (EPNV…EPSD). Gly residues predominate over residues 31–40 (GAAGGCGPEA). Residues 95–116 (SDPRGLEAAKEAELPLQTERHT) show a composition bias toward basic and acidic residues. The segment covering 608 to 627 (VISNTTEDTQLTSETQSLTG) has biased composition (polar residues). Basic and acidic residues predominate over residues 902–919 (QSTDSKYMETPVKKEPSD).

The protein resides in the cytoplasm. The protein localises to the cytosol. In terms of biological role, important for normal spermatogenesis and male fertility. Specifically required for progression to the post-meiotic stages of spermatocyte development. Seems to be necessary for normal expression levels of a number of testis-expressed gene transcripts, although its role in this process is unclear. The protein is Protein TOPAZ1 (TOPAZ1) of Homo sapiens (Human).